Consider the following 500-residue polypeptide: MTEQTQDENKLIAERRAKLEHIRANCPANGHPNNFDRKHKAADIQAEYGHHTKEELEGMDVQRSIAGRVMAKRGPFLVIQDVSGRIQAYAGKDVQKDLKATFQGLDIGDIIGVTGKLHLSGKGDLYVNMEQYQLLTKALRPLPEKFHGLSDQETRYRQRYVDLIVNEESREAFIMRSKVVSAIRNFMIKKEFMEVETPMMHSIPGGASARPFETHHNALDMAMYLRIAPELYLKRLVVGGFERVFEVNRNFRNEGLSPRHNPEFTMMEFYMAYADYKDLMDLTEEMLSSIATDLCGSTQLPYGEHTVDFGGPYARLSMLDAIKKYNPENATIQSMTYEEVKDVEFMRNLAKSIGMTIEKFWTCGQLLEEIFGETAEPQLMQPTFITGYPADISPLARRNDENHFITDRFEFFIGGREVANGFSELNDAEDQDNRFKAQVDAKDAGDDEAMFYDADYIRALEHGLPPTAGQGIGIDRLVMLFTNTHTIRDVILFPAMRPQG.

2 residues coordinate Mg(2+): glutamate 410 and glutamate 417.

This sequence belongs to the class-II aminoacyl-tRNA synthetase family. Homodimer. The cofactor is Mg(2+).

The protein localises to the cytoplasm. It carries out the reaction tRNA(Lys) + L-lysine + ATP = L-lysyl-tRNA(Lys) + AMP + diphosphate. This Shewanella piezotolerans (strain WP3 / JCM 13877) protein is Lysine--tRNA ligase.